The primary structure comprises 507 residues: 2,3-bisphosphoglycerate-independent phosphoglycerate mutase (507 aa).

Mn(2+)-binding residues include D11 and S61. Catalysis depends on S61, which acts as the Phosphoserine intermediate. Substrate is bound by residues H122, R152 to D153, R183, R189, R258 to R261, and K332. 5 residues coordinate Mn(2+): D399, H403, D440, H441, and H458.

It belongs to the BPG-independent phosphoglycerate mutase family. Monomer. It depends on Mn(2+) as a cofactor.

The catalysed reaction is (2R)-2-phosphoglycerate = (2R)-3-phosphoglycerate. The protein operates within carbohydrate degradation; glycolysis; pyruvate from D-glyceraldehyde 3-phosphate: step 3/5. Catalyzes the interconversion of 2-phosphoglycerate and 3-phosphoglycerate. The chain is 2,3-bisphosphoglycerate-independent phosphoglycerate mutase from Parabacteroides distasonis (strain ATCC 8503 / DSM 20701 / CIP 104284 / JCM 5825 / NCTC 11152).